The following is a 147-amino-acid chain: CRISP-1 (147 aa).

It belongs to the CRISP family. As to expression, expressed by the venom gland.

The protein resides in the secreted. This chain is CRISP-1, found in Phoneutria keyserlingi (Brazilian wandering spider).